Consider the following 218-residue polypeptide: MANSSSVYDWFQERLEIQDITDDVTSKYVPPHVNIFYCLGGITLVCFLIQFATGFAMTFYYKPTVTQAYSSVSYLMTDVSFGWLIRSVHRWSASMMVLMLILHVFRVYLTGGFKRPRELTWVTGVVMAVITVAFGVTGYSLPWDQVGYWAVKIVSGVPAAIPIIGDFMVELLRGGESVGQSTLTRFYSLHTFVLPWSLAVFMLMHFLMIRKQGISGPL.

Residues 35–55 (IFYCLGGITLVCFLIQFATGF) traverse the membrane as a helical segment. A heme c-binding site is contributed by C38. Positions 89 and 103 each coordinate heme b. The next 3 membrane-spanning stretches (helical) occupy residues 93 to 113 (ASMMVLMLILHVFRVYLTGGF), 119 to 139 (LTWVTGVVMAVITVAFGVTGY), and 189 to 209 (LHTFVLPWSLAVFMLMHFLMI). The heme b site is built by H190 and H205.

Belongs to the cytochrome b family. PetB subfamily. As to quaternary structure, the 4 large subunits of the cytochrome b6-f complex are cytochrome b6, subunit IV (17 kDa polypeptide, PetD), cytochrome f and the Rieske protein, while the 4 small subunits are PetG, PetL, PetM and PetN. The complex functions as a dimer. Heme b is required as a cofactor. Heme c serves as cofactor.

The protein localises to the cellular thylakoid membrane. Functionally, component of the cytochrome b6-f complex, which mediates electron transfer between photosystem II (PSII) and photosystem I (PSI), cyclic electron flow around PSI, and state transitions. This chain is Cytochrome b6, found in Prochlorococcus marinus (strain MIT 9215).